Reading from the N-terminus, the 352-residue chain is Inorganic triphosphatase (352 aa).

The CYTH domain occupies 6–203 (LQEIELKLAI…KRGYLLGSKQ (198 aa)).

The enzyme catalyses triphosphate + H2O = phosphate + diphosphate. Its function is as follows. Involved in the hydrolysis of the beta-gamma-phosphoanhydride linkage of triphosphate-containing substrates (inorganic or nucleoside-linked). Catalyzes the hydrolysis of inorganic triphosphate (PPPi), which could be cytotoxic because of its high affinity for calcium ion, thereby interfering with calcium signaling. This is Inorganic triphosphatase from Haemophilus influenzae (strain ATCC 51907 / DSM 11121 / KW20 / Rd).